The primary structure comprises 661 residues: PAN2-PAN3 deadenylation complex subunit pan3 (661 aa).

Disordered regions lie at residues 1–29 and 53–131; these read MASV…NAKD and DPHK…RQDA. The C3H1-type zinc-finger motif lies at 26 to 55; sequence NAKDTLCRNVTIYGRCRYEDKGCAFNHDPH. The short motif at 63-83 is the PABPC-interacting motif-2 (PAM-2) element; that stretch reads NASKKRFNVDSPSFTPSLLPS. Low complexity predominate over residues 77–104; that stretch reads TPSLLPSNGSSPTSSSSSLKKSSTISPK. Positions 115–126 are enriched in polar residues; the sequence is TAASRSNTSTPG. The interval 263–524 is pseudokinase domain; the sequence is QTLPNTQLPA…NIDILINGIS (262 aa). Residues arginine 315, 364–371, and 424–425 contribute to the ATP site; these read DYHPLSKT and SK. The stretch at 525–563 forms a coiled coil; it reads SQLMSTFDSALHLDDQLTSDLGRELENGRLVRLLTKLNF. Positions 564 to 661 are knob domain; the sequence is INERPEHEHD…ALLRPSRRPH (98 aa).

This sequence belongs to the protein kinase superfamily. PAN3 family. As to quaternary structure, homodimer. Forms a heterotrimer with a catalytic subunit pan2 to form the poly(a)-nuclease (PAN) deadenylation complex. Interacts (via PAM-2 motif) with poly(A)-binding protein pab1 (via PABC domain), conferring substrate specificity of the enzyme complex.

It is found in the cytoplasm. Its function is as follows. Regulatory subunit of the poly(A)-nuclease (PAN) deadenylation complex, one of two cytoplasmic mRNA deadenylases involved in mRNA turnover. PAN specifically shortens poly(A) tails of RNA and the activity is stimulated by poly(A)-binding protein pab1. PAN deadenylation is followed by rapid degradation of the shortened mRNA tails by the CCR4-NOT complex. Deadenylated mRNAs are then degraded by two alternative mechanisms, namely exosome-mediated 3'-5' exonucleolytic degradation, or deadenylation-dependent mRNA decaping and subsequent 5'-3' exonucleolytic degradation by XRN1. May also be involved in post-transcriptional maturation of mRNA poly(A) tails. pan3 acts as a positive regulator for PAN activity, recruiting the catalytic subunit pan2 to mRNA via its interaction with RNA and with pab1. This Emericella nidulans (strain FGSC A4 / ATCC 38163 / CBS 112.46 / NRRL 194 / M139) (Aspergillus nidulans) protein is PAN2-PAN3 deadenylation complex subunit pan3.